The following is a 297-amino-acid chain: Developmental pluripotency-associated protein 4 (297 aa).

A disordered region spans residues 1–77 (MEPSGSKKGR…KVPVPPFPQH (77 aa)). A compositionally biased stretch (low complexity) spans 23-34 (SSQPSTSSAKTK). Residues 43–63 (SEKDDGCKPEEKSAQDPETPG) show a composition bias toward basic and acidic residues. Position 211 is a phosphoserine (Ser-211).

Interacts with DPPA2. Interacts with PCGF1.

The protein resides in the nucleus. May be involved in the maintenance of active epigenetic status of target genes. May inhibit differentiation of embryonic stem (ES) cells into a primitive ectoderm lineage. This Rattus norvegicus (Rat) protein is Developmental pluripotency-associated protein 4 (Dppa4).